A 787-amino-acid chain; its full sequence is Probable basic-leucine zipper transcription factor J (787 aa).

Residues 18 to 90 are compositionally biased toward low complexity; the sequence is NSNIHNNTHN…NNTQNTNNGT (73 aa). Disordered regions lie at residues 18-95, 153-173, 186-306, 343-372, 401-441, and 473-507; these read NSNI…LTPL, LNLS…NNNP, LQSQ…NNNT, DSLL…IQTS, LSSA…NNSN, and ASSE…DEDQ. 4 stretches are compositionally biased toward low complexity: residues 186–223, 235–258, 273–305, and 351–366; these read LQSQ…SSPI, SSPI…STSP, NNNN…LNNN, and NNNN…NNNN. Positions 473-483 are enriched in low complexity; it reads ASSESAQSESS. The 64-residue stretch at 549–612 folds into the bZIP domain; the sequence is ELKKQRRLVK…KALKKQLYSL (64 aa). The basic motif stretch occupies residues 551–603; it reads KKQRRLVKNREYASQSRSRRKIYVENIETKLQKTNQDCASIKSQLNSVKEENK. Residues 605-612 form a leucine-zipper region; the sequence is LKKQLYSL. Disordered stretches follow at residues 723–747 and 763–787; these read SNYI…VVST and DKEV…SPLN. Residues 763–778 are compositionally biased toward basic and acidic residues; it reads DKEVPQKCKDSSDLKC.

Belongs to the bZIP family.

It localises to the nucleus. Its function is as follows. Probable transcriptional regulator. This is Probable basic-leucine zipper transcription factor J (bzpJ) from Dictyostelium discoideum (Social amoeba).